The primary structure comprises 240 residues: tRNA pseudouridine synthase A (240 aa).

The active-site Nucleophile is D50. Residue Y109 participates in substrate binding.

This sequence belongs to the tRNA pseudouridine synthase TruA family. As to quaternary structure, homodimer.

The enzyme catalyses uridine(38/39/40) in tRNA = pseudouridine(38/39/40) in tRNA. Formation of pseudouridine at positions 38, 39 and 40 in the anticodon stem and loop of transfer RNAs. This Campylobacter jejuni subsp. jejuni serotype O:6 (strain 81116 / NCTC 11828) protein is tRNA pseudouridine synthase A.